Consider the following 261-residue polypeptide: Precorrin-6A reductase (261 aa).

This sequence belongs to the precorrin-6x reductase family.

The enzyme catalyses precorrin-6B + NADP(+) = precorrin-6A + NADPH + 2 H(+). Its pathway is cofactor biosynthesis; adenosylcobalamin biosynthesis; cob(II)yrinate a,c-diamide from precorrin-2 (aerobic route): step 6/10. Its function is as follows. Catalyzes the reduction of the macrocycle of precorrin-6X into precorrin-6Y. The protein is Precorrin-6A reductase (cobK) of Sinorhizobium sp.